The following is a 192-amino-acid chain: U1 small nuclear ribonucleoprotein C (192 aa).

A Matrin-type zinc finger spans residues 4–36 (YYCEYCDIYLTHSSPVGRRQHNQGRKHISAKIE). Residues 118-192 (PGANKYPNNN…FVNKNSEQPN (75 aa)) are disordered. A compositionally biased stretch (polar residues) spans 133 to 154 (RISNTPKPYNNYTNKPITNSPY). Positions 164 to 173 (NNENSNNFSN) are enriched in low complexity. Polar residues predominate over residues 174–192 (YQMNKDNSNFVNKNSEQPN).

Belongs to the U1 small nuclear ribonucleoprotein C family. As to quaternary structure, U1 snRNP is composed of the 7 core Sm proteins B/B', D1, D2, D3, E, F and G that assemble in a heptameric protein ring on the Sm site of the small nuclear RNA to form the core snRNP, and at least 3 U1 snRNP-specific proteins U1-70K, U1-A and U1-C. U1-C interacts with U1 snRNA and the 5' splice-site region of the pre-mRNA.

The protein localises to the nucleus. Component of the spliceosomal U1 snRNP, which is essential for recognition of the pre-mRNA 5' splice-site and the subsequent assembly of the spliceosome. U1-C is directly involved in initial 5' splice-site recognition for both constitutive and regulated alternative splicing. The interaction with the 5' splice-site seems to precede base-pairing between the pre-mRNA and the U1 snRNA. Stimulates commitment or early (E) complex formation by stabilizing the base pairing of the 5' end of the U1 snRNA and the 5' splice-site region. This Plasmodium chabaudi chabaudi protein is U1 small nuclear ribonucleoprotein C.